Here is a 149-residue protein sequence, read N- to C-terminus: Putative inactive group IIC secretory phospholipase A2 (149 aa).

The N-terminal stretch at 1 to 18 (MKVIAILTLLLFCSPTHS) is a signal peptide. 4 disulfides stabilise this stretch: cysteine 44/cysteine 142, cysteine 77/cysteine 107, cysteine 95/cysteine 112, and cysteine 97/cysteine 105. Ca(2+) contacts are provided by tyrosine 45, glycine 47, and glycine 49.

It belongs to the phospholipase A2 family. Ca(2+) is required as a cofactor.

It is found in the secreted. Inactive phospholipase. The sequence is that of Putative inactive group IIC secretory phospholipase A2 (PLA2G2C) from Homo sapiens (Human).